A 643-amino-acid polypeptide reads, in one-letter code: Probable potassium transport system protein Kup (643 aa).

Positions 1-12 are enriched in basic and acidic residues; sequence MSISSKTEDSDI. The tract at residues 1–20 is disordered; the sequence is MSISSKTEDSDIRSSVMTDH. Helical transmembrane passes span 28-48, 65-85, 121-141, 158-178, 187-207, 224-244, 268-288, 301-321, 358-378, 384-404, 415-435, and 440-460; these read LAGLSLAALGVVFGDIGTSPL, AGNVLGVLSLLFWALVLIVGL, WLLVAIGLFGASLLYGDGMIT, PAFHEMVIPLTMLVLAGLFLF, GALFGPIILLWFIAIAILGII, GISFLLGNNLKGFTVLGAVFL, WFLLVLPALLLNYFGQGALLL, LVPSWAMIPMVLLATSATIIA, IYVPAANWSLMVGTIGIVAWF, LAAAYGVAVTATMLISTILFY, PAALNVMITFFAAIDLSFFGA, and LFHGAWVPLAVALVMFTIMNT.

Belongs to the HAK/KUP transporter (TC 2.A.72) family.

The protein localises to the cell inner membrane. The catalysed reaction is K(+)(in) + H(+)(in) = K(+)(out) + H(+)(out). Functionally, transport of potassium into the cell. Likely operates as a K(+):H(+) symporter. The sequence is that of Probable potassium transport system protein Kup from Chlorobium luteolum (strain DSM 273 / BCRC 81028 / 2530) (Pelodictyon luteolum).